A 190-amino-acid chain; its full sequence is ATP synthase subunit delta (190 aa).

Belongs to the ATPase delta chain family. As to quaternary structure, F-type ATPases have 2 components, F(1) - the catalytic core - and F(0) - the membrane proton channel. F(1) has five subunits: alpha(3), beta(3), gamma(1), delta(1), epsilon(1). F(0) has three main subunits: a(1), b(2) and c(10-14). The alpha and beta chains form an alternating ring which encloses part of the gamma chain. F(1) is attached to F(0) by a central stalk formed by the gamma and epsilon chains, while a peripheral stalk is formed by the delta and b chains.

Its subcellular location is the cell inner membrane. Its function is as follows. F(1)F(0) ATP synthase produces ATP from ADP in the presence of a proton or sodium gradient. F-type ATPases consist of two structural domains, F(1) containing the extramembraneous catalytic core and F(0) containing the membrane proton channel, linked together by a central stalk and a peripheral stalk. During catalysis, ATP synthesis in the catalytic domain of F(1) is coupled via a rotary mechanism of the central stalk subunits to proton translocation. This protein is part of the stalk that links CF(0) to CF(1). It either transmits conformational changes from CF(0) to CF(1) or is implicated in proton conduction. The sequence is that of ATP synthase subunit delta from Methylobacterium radiotolerans (strain ATCC 27329 / DSM 1819 / JCM 2831 / NBRC 15690 / NCIMB 10815 / 0-1).